Here is a 397-residue protein sequence, read N- to C-terminus: Teichoic acid D-alanine hydrolase (397 aa).

The first 23 residues, 1 to 23 (MKFNKVKLVIHACVLLFIIISIA), serve as a signal peptide directing secretion.

The protein resides in the cell membrane. The enzyme catalyses [(4-D-Ala)-(2-GlcNAc)-Rib-ol-P]n-[Gro-P]m-beta-D-ManNAc-(1-&gt;4)-alpha-D-GlcNAc-P-peptidoglycan + n H2O = [(2-GlcNAc)-Rib-ol-P]n-[Gro-P]m-beta-D-ManNAc-(1-&gt;4)-alpha-D-GlcNAc-P-peptidoglycan + n D-alanine.. Its function is as follows. Catalyzes the liberation of D-alanyl moieties present on wall teichoic acid (WTA) and lipoteichoic acid (LTA). Affects the methicillin resistance level and autolysis in the presence of Triton X-100 as well as the cell wall structure. The chain is Teichoic acid D-alanine hydrolase (fmtA) from Staphylococcus aureus (strain NCTC 8325 / PS 47).